We begin with the raw amino-acid sequence, 2627 residues long: Telomerase protein component 1 (2627 aa).

TEP1 N-terminal repeat units follow at residues 1-30 (MEKLHGHVSAHPDILSLENRCLAMLPDLQP), 31-60 (LEKLHQHVSTHSDILSLKNQCLATLPDLKT), 61-90 (MEKPHGYVSAHPDILSLENQCLATLSDLKT), and 91-120 (MEKPHGHVSAHPDILSLENRCLATLSSLKS). Disordered regions lie at residues 193-214 (FDSEEKKGAETQMPSYSLSLGE) and 383-402 (RKHRAKRHPRRPPRSPGMEP). Residues 223–676 (VKLTSGDSES…VKHSLPLLPG (454 aa)) form the TROVE domain. Residues 383–395 (RKHRAKRHPRRPP) are compositionally biased toward basic residues. In terms of domain architecture, NACHT spans 1162–1490 (RLSLVTGQSG…PLERPGARLC (329 aa)). Residue 1168-1175 (GQSGQGKT) participates in ATP binding. WD repeat units follow at residues 1411–1448 (VLPQALTALEVTRSGLTVDQLHGVLSVWRTLPKGTKSW), 1674–1713 (AVSSSPTAVAFSTNGQRAAVGTANGTVYLLDLRTWQEEKS), 1716–1754 (SGCDGISACLFLSDDTLFLTAFDGLLELWDLQHGCRVLQ), 1757–1796 (AHQYQITGCCLSPDCRLLATVCLGGCLKLWDTVRGQLAFQ), 1798–1837 (TYPKSLNCVAFHPEGQVIATGSWAGSISFFQVDGLKVTKD), 1840–1879 (APGASIRTLAFNVPGGVVAVGRLDSMVELWAWREGARLAA), 1882–1921 (AHHGFVAAALFLHAGCQLLTAGEDGKVQVWSGSLGRPRGH), 1925–1964 (LSLSPALSVALSPDGDRVAVGYRADGIRIYKISSGSQGAQ), 1967–2005 (ALDVAVSALAWLSPKVLVSGAEDGSLQGWALKECSLQSL), 2008–2047 (LSRFQKPVLGLATSQELLASASEDFTVQLWPRQLLTRPHK), 2059–2098 (GHEGPVSCCSFSTDGGSLATGGRDRSLLCWDVRTPKTPVL), 2105–2143 (CHRDWVTGCAWTKDNLLISCSSDGSVGLWDPESGQRLGQ), 2146–2183 (GHQSAVSAVAAVEEHVVSVSRDGTLKVWDHQGVELTSI), 2185–2233 (AHSG…QTHT), 2236–2275 (GHSGPVRAAAVSETSGLMLTASEDGSVRLWQVPKEADDTC), 2278–2317 (RSSAAVTAVAWAPDGSMAVSGNQAGELILWQEAKAVATAQ), 2319–2355 (PGHIGALIWSSAHTFFVLSADEKISEWQVKLRKGSAP), 2368–2417 (EDLG…PMIL), and 2459–2500 (NPSR…GEWT). Positions 2506 to 2522 (QKKANTPETQTPGTDPS) are enriched in polar residues. The tract at residues 2506-2551 (QKKANTPETQTPGTDPSTCRESDASMDSDASMDSEPTPHLKTRQRR) is disordered. WD repeat units follow at residues 2553-2590 (IHSGSVTALHVLPELLVTASKDRDVKLWERPSMQLLGL) and 2592-2626 (RCEGSVSCLEPWLGANSTLQLAVGDVQGNVYFLNW).

In terms of assembly, associated component of the telomerase holoenzyme complex. Component of the vault ribonucleoprotein particle, at least composed of MVP, PARP4 and one or more vault RNAs (vRNAs). Binds to VAULTRC1, VAULTRC2 and VAULTRC4/hvg4 vRNAs. In terms of tissue distribution, ubiquitous.

It is found in the nucleus. The protein localises to the chromosome. It localises to the telomere. Functionally, component of the telomerase ribonucleoprotein complex that is essential for the replication of chromosome termini. Also a component of the ribonucleoprotein vaults particle, a multi-subunit structure involved in nucleo-cytoplasmic transport. Responsible for the localizing and stabilizing vault RNA (vRNA) association in the vault ribonucleoprotein particle. Binds to TERC. The protein is Telomerase protein component 1 (TEP1) of Homo sapiens (Human).